Here is a 112-residue protein sequence, read N- to C-terminus: Urocortin-2 (112 aa).

The N-terminal stretch at 1–22 (MTRCALLLLMVLMLGRVLVVPV) is a signal peptide. Residues 23-70 (TPIPTFQLRPQNSPQTTPRPAASESPSAAPTWPWAAQSHCSPTRHPGS) constitute a propeptide that is removed on maturation. The tract at residues 27–66 (TFQLRPQNSPQTTPRPAASESPSAAPTWPWAAQSHCSPTR) is disordered. A compositionally biased stretch (low complexity) spans 38–58 (TTPRPAASESPSAAPTWPWAA).

Belongs to the sauvagine/corticotropin-releasing factor/urotensin I family. Binds with high affinity to CRF receptors 2-alpha and 2-beta. In terms of processing, glycosylated.

It is found in the secreted. Its function is as follows. Suppresses food intake, delays gastric emptying and decreases heat-induced edema. Might represent an endogenous ligand for maintaining homeostasis after stress. This chain is Urocortin-2 (UCN2), found in Homo sapiens (Human).